Consider the following 618-residue polypeptide: DNA mismatch repair protein MutL (618 aa).

A compositionally biased stretch (low complexity) spans 366–381; that stretch reads AEPTAAREPATPRYSG. Positions 366 to 405 are disordered; the sequence is AEPTAAREPATPRYSGGTSGGNGGRQSAGGWPHAQPGYQK. A compositionally biased stretch (gly residues) spans 382-392; sequence GTSGGNGGRQS.

This sequence belongs to the DNA mismatch repair MutL/HexB family.

In terms of biological role, this protein is involved in the repair of mismatches in DNA. It is required for dam-dependent methyl-directed DNA mismatch repair. May act as a 'molecular matchmaker', a protein that promotes the formation of a stable complex between two or more DNA-binding proteins in an ATP-dependent manner without itself being part of a final effector complex. This is DNA mismatch repair protein MutL from Salmonella agona (strain SL483).